A 260-amino-acid chain; its full sequence is Glutamate racemase (260 aa).

Substrate is bound by residues 14-15 and 46-47; these read DS and YG. Cysteine 77 acts as the Proton donor/acceptor in catalysis. Residue 78–79 participates in substrate binding; sequence NT. Cysteine 188 serves as the catalytic Proton donor/acceptor. 189-190 provides a ligand contact to substrate; the sequence is TH.

It belongs to the aspartate/glutamate racemases family.

It catalyses the reaction L-glutamate = D-glutamate. Its pathway is cell wall biogenesis; peptidoglycan biosynthesis. Provides the (R)-glutamate required for cell wall biosynthesis. The protein is Glutamate racemase of Clostridium perfringens (strain SM101 / Type A).